The chain runs to 159 residues: Small ribosomal subunit protein uS15 (159 aa).

The segment covering 1-16 has biased composition (basic residues); sequence MNKRKEKGKSHSKRPV. A disordered region spans residues 1-22; sequence MNKRKEKGKSHSKRPVRNTPPR.

This sequence belongs to the universal ribosomal protein uS15 family. As to quaternary structure, part of the 30S ribosomal subunit.

In Ignicoccus hospitalis (strain KIN4/I / DSM 18386 / JCM 14125), this protein is Small ribosomal subunit protein uS15.